Consider the following 311-residue polypeptide: 4-hydroxy-tetrahydrodipicolinate synthase (311 aa).

Thr49 is a binding site for pyruvate. The active-site Proton donor/acceptor is the Tyr138. Lys166 functions as the Schiff-base intermediate with substrate in the catalytic mechanism. Ile207 serves as a coordination point for pyruvate.

Belongs to the DapA family. Homotetramer; dimer of dimers.

The protein resides in the cytoplasm. The catalysed reaction is L-aspartate 4-semialdehyde + pyruvate = (2S,4S)-4-hydroxy-2,3,4,5-tetrahydrodipicolinate + H2O + H(+). It participates in amino-acid biosynthesis; L-lysine biosynthesis via DAP pathway; (S)-tetrahydrodipicolinate from L-aspartate: step 3/4. Catalyzes the condensation of (S)-aspartate-beta-semialdehyde [(S)-ASA] and pyruvate to 4-hydroxy-tetrahydrodipicolinate (HTPA). This chain is 4-hydroxy-tetrahydrodipicolinate synthase, found in Limosilactobacillus fermentum (strain NBRC 3956 / LMG 18251) (Lactobacillus fermentum).